The chain runs to 2555 residues: Ubiquitin carboxyl-terminal hydrolase 9Y (2555 aa).

The segment at Met1–Pro66 is disordered. Polar residues predominate over residues Asn13–Ala45. Ser589 is subject to Phosphoserine. Thr591 carries the post-translational modification Phosphothreonine. The tract at residues Asn972–Asp997 is disordered. Residues Pro974–Ser984 are compositionally biased toward low complexity. The USP domain maps to Val1559 to Met1958. Residue Cys1568 is the Nucleophile of the active site. Zn(2+) contacts are provided by Cys1729, His1731, Cys1773, and Cys1776. His1881 (proton acceptor) is an active-site residue. Ser2444 is subject to Phosphoserine. Positions Pro2476–Ala2485 are enriched in acidic residues. Positions Pro2476–Gln2555 are disordered. Composition is skewed to polar residues over residues Pro2504–Val2514 and Asn2528–Gln2555. Phosphotyrosine is present on Tyr2541. A Phosphoserine modification is found at Ser2548.

It belongs to the peptidase C19 family. In terms of tissue distribution, widely expressed in embryonic and adult tissues.

The enzyme catalyses Thiol-dependent hydrolysis of ester, thioester, amide, peptide and isopeptide bonds formed by the C-terminal Gly of ubiquitin (a 76-residue protein attached to proteins as an intracellular targeting signal).. It functions in the pathway protein modification; protein ubiquitination. Its function is as follows. Deubiquitinase that mediates deubiquitination of target proteins. May stabilize target proteins that are important for male germ cell development. The protein is Ubiquitin carboxyl-terminal hydrolase 9Y of Homo sapiens (Human).